Reading from the N-terminus, the 125-residue chain is Phosphoribosyl-AMP cyclohydrolase (125 aa).

Mg(2+) is bound at residue D80. C81 lines the Zn(2+) pocket. Residues D82 and D84 each contribute to the Mg(2+) site. Zn(2+)-binding residues include C97 and C104.

It belongs to the PRA-CH family. As to quaternary structure, homodimer. Requires Mg(2+) as cofactor. The cofactor is Zn(2+).

It is found in the cytoplasm. It catalyses the reaction 1-(5-phospho-beta-D-ribosyl)-5'-AMP + H2O = 1-(5-phospho-beta-D-ribosyl)-5-[(5-phospho-beta-D-ribosylamino)methylideneamino]imidazole-4-carboxamide. It participates in amino-acid biosynthesis; L-histidine biosynthesis; L-histidine from 5-phospho-alpha-D-ribose 1-diphosphate: step 3/9. Catalyzes the hydrolysis of the adenine ring of phosphoribosyl-AMP. This is Phosphoribosyl-AMP cyclohydrolase from Leifsonia xyli subsp. xyli (strain CTCB07).